The following is a 112-amino-acid chain: Large ribosomal subunit protein P1w (112 aa).

Positions 85–112 are disordered; that stretch reads AAAPAAEEKKKDEPAEESDGDLGFGLFD. Ser-102 bears the Phosphoserine mark.

The protein belongs to the eukaryotic ribosomal protein P1/P2 family. P1 and P2 exist as dimers at the large ribosomal subunit.

Functionally, plays an important role in the elongation step of protein synthesis. In Arabidopsis thaliana (Mouse-ear cress), this protein is Large ribosomal subunit protein P1w (RPP1A).